The primary structure comprises 296 residues: MGSIPEFSIRDLMEAGVHLGHKAGRWNPAMAPYIYGVHRYKDIHIIDLRKTAVLLRNALSVLYDVVHRRGRVLFVGTKVQASNVIAEEAARCGQYYVNHRWLGGMLTNWETVSSSIRRLLDFEKLLNDTDAKFTKKELLMFDKKREKLERSLGGIREMGGLPHILFVIDTNKEHIAIQEANKLKIPVVAVLDTNSDPRGVDYPIPGNDDSIRSIDFFCRAVSNTILEAIRSDLMSSGISVAGSVGQAKDGSVVDSGKGKSIAAHKGGGKASKGAAEVVAGGSVVSASGGEDAVVQE.

The segment at 246 to 272 (QAKDGSVVDSGKGKSIAAHKGGGKASK) is disordered.

The protein belongs to the universal ribosomal protein uS2 family.

This Anaplasma phagocytophilum (strain HZ) protein is Small ribosomal subunit protein uS2.